Here is a 361-residue protein sequence, read N- to C-terminus: Tegument protein UL51 homolog (361 aa).

Cys-8 is lipidated: S-palmitoyl cysteine; by host. A disordered region spans residues 251–299; that stretch reads GDEEDEVTVMSPSPEPVQQQPPVEPVQQQPQGRGSHRRRYKESAPQETL. Residues 266–281 show a composition bias toward low complexity; the sequence is PVQQQPPVEPVQQQPQ.

Belongs to the herpesviridae UL51 family. In terms of assembly, oligomerizes. Interacts with UL103; this interaction mediates UL103 incorporation to virions. In terms of processing, phosphorylated. Post-translationally, palmitoylation is necessary for Golgi localization.

The protein localises to the virion tegument. It is found in the host cytoplasm. It localises to the host Golgi apparatus. Its function is as follows. Plays several roles during the time course of infection, including egress of virus particles from the perinuclear space and secondary envelopment of cytoplasmic capsids that bud into specific trans-Golgi network (TGN)-derived membranes. This chain is Tegument protein UL51 homolog (UL71), found in Homo sapiens (Human).